We begin with the raw amino-acid sequence, 108 residues long: Circadian clock oscillator protein KaiB (108 aa).

This sequence belongs to the KaiB family. Undergoes a major conformational rearrangment; in the free state forms homotetramers with 2 dimers. When bound to the CI domain of KaiC, KaiA or CikA switches to a monomeric thioredoxin-fold (KaiB(fs)). The KaiABC complex composition changes during the circadian cycle to control KaiC phosphorylation. Complexes KaiC(6), KaiA(2-4):KaiC(6), KaiB(6):KaiC(6) and KaiC(6):KaiB(6):KaiA(12) are among the most important forms, many form cooperatively. Binds to KaiA; 1 KaiB(fs) binds to the KaiA homodimer. Binds to the B-loop in the CI domain of KaiC; SasA and KaiB compete to bind to the CI domain. Binding to KaiC CI domain occurs 1:1. KaiA and CikA bind to the same region of KaiB(fs) and therefore compete.

Key component of the KaiABC oscillator complex, which constitutes the main circadian regulator in cyanobacteria. Its composition changes during the circadian cycle to control KaiC phosphorylation. KaiA stimulates KaiC autophosphorylation, while KaiB sequesters KaiA, leading to KaiC autodephosphorylation. KaiA binding to KaiC yields KaiA(2-4):KaiC(6) complexes which stimulate KaiC autophosphorylation. Phospho-Ser-431 KaiC accumulation triggers binding of KaiB to form the KaiB(6):KaiC(6) complex, leading to changes in the output regulators CikA and SasA. KaiB switches to a thioredoxin-like fold (KaiB(fs)) in complex with KaiC. KaiB(6):KaiC(6) formation exposes a site for KaiA binding that sequesters KaiA from the CII domain, making the KaiC(6):KaiB(6):KaiA(12) complex that results in KaiC autodephosphorylation. Complete dephosphorylation of KaiC leads to dissociation of KaiA(2):KaiB(1), completing 1 cycle of the Kai oscillator. Functionally, a metamorphic protein which reversibly switches between an inactive tetrameric fold and a rare, thioredoxin-like monomeric fold (KaiB(fs)). KaiB(fs) binds phospho-KaiC, KaiA and CikA. KaiA and CikA compete for binding to KaiB(fs), and KaiB(fs) and SasA compete for binding to KaiC, thus the clock oscillator and output signal pathway are tightly coupled. The sequence is that of Circadian clock oscillator protein KaiB from Thermosynechococcus vestitus (strain NIES-2133 / IAM M-273 / BP-1).